Consider the following 962-residue polypeptide: Splicing regulator ARVCF (962 aa).

A coiled-coil region spans residues 11-46 (SILASVKEQEARFERLTRALEQERRHVALQLERAQQ). The segment at 95–123 (VTVEEDPGTPTSHVSIVTSEDGTTRRTET) is disordered. Residues threonine 103 and threonine 105 each carry the phosphothreonine modification. A compositionally biased stretch (polar residues) spans 103-115 (TPTSHVSIVTSED). Arginine 171 is modified (omega-N-methylarginine). Disordered regions lie at residues 233-255 (GRRE…LPEH), 268-291 (RSLA…TRRR), and 322-357 (AATA…EPRW). Residue serine 269 is modified to Phosphoserine. The span at 272–282 (ADDEGGPDLEP) shows a compositional bias: acidic residues. Phosphoserine occurs at positions 334, 337, 345, and 347. 6 ARM repeats span residues 350–389 (STRK…HLCF), 392–431 (EGIK…NLSY), 435–469 (TDNK…VTGT), 470–510 (LWNL…NEDS), 528–567 (LRNV…DTDN), and 577–623 (MRNL…GKKA). The segment at 593–618 (RYQEAEPGIPGSTTSQRRRKDDASCF) is disordered. The residue at position 607 (serine 607) is a Phosphoserine. Positions 608-624 (QRRRKDDASCFGGKKAK) match the Nuclear localization signal motif. Threonine 643 is modified (phosphothreonine). ARM repeat units lie at residues 647-687 (PKRT…AAGA), 700-739 (TYIR…NLSL), 740-782 (DQRN…AVLN), and 783-827 (TIHE…SHVL). A required for interaction with RNA-binding proteins DDX5, HNRNPH2 and SRSF1 and with mRNAs region spans residues 777-962 (VVAVLNTIHE…TKPQPVDSWV (186 aa)). Residues 844 to 962 (GWTKSRFQSA…TKPQPVDSWV (119 aa)) are disordered. A phosphoserine mark is found at serine 864 and serine 871. Position 872 is a phosphothreonine (threonine 872). Basic and acidic residues-rich tracts occupy residues 878–887 (KSLDGEKSNT) and 920–932 (TSEK…DPGR).

The protein belongs to the beta-catenin family. Component of a ribonucleoprotein complex containing mRNAs and RNA-binding proteins including DDX5, HNRNPH2 and SRSF1 as well as ARVCF. Interacts (via the extreme C-terminus) with FRMPD2 (via the PDZ 2 domain). Interacts with CCDC85B.

The protein localises to the cell junction. It localises to the adherens junction. It is found in the nucleus. The protein resides in the cytoplasm. Its function is as follows. Contributes to the regulation of alternative splicing of pre-mRNAs. This is Splicing regulator ARVCF (Arvcf) from Mus musculus (Mouse).